The primary structure comprises 440 residues: Serine/threonine-protein kinase 2 (440 aa).

The region spanning 85–440 is the Protein kinase domain; that stretch reads NDDFYHISTG…FSNWINGESC (356 aa). ATP-binding positions include 91–99 and K115; that span reads ISTGGYGIV. The Proton acceptor role is filled by D306.

The protein belongs to the protein kinase superfamily. Ser/Thr protein kinase family. Poxviruses subfamily. In terms of processing, phosphorylated in vivo. Autophosphorylated in vitro.

Its subcellular location is the host endoplasmic reticulum. It localises to the host endoplasmic reticulum-Golgi intermediate compartment. The catalysed reaction is L-seryl-[protein] + ATP = O-phospho-L-seryl-[protein] + ADP + H(+). It catalyses the reaction L-threonyl-[protein] + ATP = O-phospho-L-threonyl-[protein] + ADP + H(+). In terms of biological role, essential serine-protein kinase involved in the early stage of virion morphogenesis. The chain is Serine/threonine-protein kinase 2 (OPG054) from Sus scrofa (Pig).